Reading from the N-terminus, the 433-residue chain is MSVLLLEAFYGGSHKQLLDLLKESVEDCVSFTLPAKKWHWRARTSALYFMQAVPANSSYRVLFTSSVLNLAELVALRPDLGHLKKVLYFHENQLVYPVRKSQERDFQYGYNQILSCLVADVVVFNSSFNMESFLSSISTFMKTMPDHRPKDLERLIRPKCHVLHFPIRFPDVTRFLPAHKRLRHPVRCDDIHAPAAKSHIQTSSPSSYPDVEPPEKMLNVAGTNQSHEPTSVTPHQETASPLCGHEGEKLRPLHIVWPHRWEHDKDPQLFFQTLLKLKDRQLSFEVSVLGETFTDVPDIFSEAKEQLVDHIQHWGFMPSKEDYLKVLCQADVVVSTAKHEFFGVAMLEAVHCGCYPLCPKALVYPEIFPATYLYSTPEQLCKRLQEFCKRPQLARQHVVQVSLSSFSWDSLGDNFRSLLKADSGRMFTDKHMA.

Residues 194 to 244 are disordered; that stretch reads PAAKSHIQTSSPSSYPDVEPPEKMLNVAGTNQSHEPTSVTPHQETASPLCG. The span at 221-239 shows a compositional bias: polar residues; sequence AGTNQSHEPTSVTPHQETA.

It belongs to the glycosyltransferase group 1 family. Glycosyltransferase 4 subfamily.

It localises to the cytoplasm. The protein localises to the nucleus. It carries out the reaction queuosine(34) in tRNA(Asp) + GDP-alpha-D-mannose = O-4''-alpha-D-mannosylqueuosine(34) in tRNA(Asp) + GDP + H(+). In terms of biological role, glycosyltransferase that specifically catalyzes mannosylation of cytoplasmic tRNA(Asp) modified with queuosine at position 34 (queuosine(34)). Mannosylates the cyclopentene moiety of queuosine(34) in tRNA(Asp) to form mannosyl-queuosine(34). Mannosylation of queuosine(34) in tRNA(Asp) is required to slow-down elongation at cognate codons, GAC and GAU, thereby regulating protein translation. This Danio rerio (Zebrafish) protein is tRNA-queuosine alpha-mannosyltransferase (gtdc1).